Here is an 88-residue protein sequence, read N- to C-terminus: Small ribosomal subunit protein uS15 (88 aa).

The protein belongs to the universal ribosomal protein uS15 family. As to quaternary structure, part of the 30S ribosomal subunit. Forms a bridge to the 50S subunit in the 70S ribosome, contacting the 23S rRNA.

One of the primary rRNA binding proteins, it binds directly to 16S rRNA where it helps nucleate assembly of the platform of the 30S subunit by binding and bridging several RNA helices of the 16S rRNA. Its function is as follows. Forms an intersubunit bridge (bridge B4) with the 23S rRNA of the 50S subunit in the ribosome. The chain is Small ribosomal subunit protein uS15 from Syntrophus aciditrophicus (strain SB).